The following is a 430-amino-acid chain: Adenylosuccinate synthetase (430 aa).

GTP is bound by residues 12 to 18 (GDEGKGK) and 40 to 42 (GHT). The Proton acceptor role is filled by aspartate 13. The Mg(2+) site is built by aspartate 13 and glycine 40. IMP-binding positions include 13–16 (DEGK), 38–41 (NAGH), threonine 128, arginine 142, glutamine 223, threonine 238, and arginine 302. Histidine 41 functions as the Proton donor in the catalytic mechanism. 298 to 304 (TTTGRPR) is a binding site for substrate. GTP contacts are provided by residues arginine 304, 330–332 (LLD), and 412–414 (SVG).

The protein belongs to the adenylosuccinate synthetase family. As to quaternary structure, homodimer. Mg(2+) is required as a cofactor.

The protein resides in the cytoplasm. It carries out the reaction IMP + L-aspartate + GTP = N(6)-(1,2-dicarboxyethyl)-AMP + GDP + phosphate + 2 H(+). Its pathway is purine metabolism; AMP biosynthesis via de novo pathway; AMP from IMP: step 1/2. Its function is as follows. Plays an important role in the de novo pathway of purine nucleotide biosynthesis. Catalyzes the first committed step in the biosynthesis of AMP from IMP. The protein is Adenylosuccinate synthetase of Listeria welshimeri serovar 6b (strain ATCC 35897 / DSM 20650 / CCUG 15529 / CIP 8149 / NCTC 11857 / SLCC 5334 / V8).